The following is a 597-amino-acid chain: Aspartate--tRNA(Asp/Asn) ligase (597 aa).

Glutamate 178 provides a ligand contact to L-aspartate. Residues 202-205 form an aspartate region; the sequence is QLFK. Arginine 224 lines the L-aspartate pocket. ATP is bound by residues 224–226 and glutamine 233; that span reads RDE. L-aspartate is bound at residue histidine 458. Glutamate 488 serves as a coordination point for ATP. Arginine 495 lines the L-aspartate pocket. 540 to 543 is a binding site for ATP; the sequence is GLDR.

This sequence belongs to the class-II aminoacyl-tRNA synthetase family. Type 1 subfamily. Homodimer.

It is found in the cytoplasm. It catalyses the reaction tRNA(Asx) + L-aspartate + ATP = L-aspartyl-tRNA(Asx) + AMP + diphosphate. Aspartyl-tRNA synthetase with relaxed tRNA specificity since it is able to aspartylate not only its cognate tRNA(Asp) but also tRNA(Asn). Reaction proceeds in two steps: L-aspartate is first activated by ATP to form Asp-AMP and then transferred to the acceptor end of tRNA(Asp/Asn). The polypeptide is Aspartate--tRNA(Asp/Asn) ligase (Cyanothece sp. (strain PCC 7425 / ATCC 29141)).